A 212-amino-acid polypeptide reads, in one-letter code: Thiamine-phosphate synthase (212 aa).

A 4-amino-2-methyl-5-(diphosphooxymethyl)pyrimidine-binding site is contributed by 38-42; that stretch reads QLREK. Mg(2+) is bound by residues Asp71 and Asp90. Position 138 (Lys138) interacts with 4-amino-2-methyl-5-(diphosphooxymethyl)pyrimidine. Residue Gly166 coordinates 2-[(2R,5Z)-2-carboxy-4-methylthiazol-5(2H)-ylidene]ethyl phosphate.

This sequence belongs to the thiamine-phosphate synthase family. Mg(2+) is required as a cofactor.

The catalysed reaction is 2-[(2R,5Z)-2-carboxy-4-methylthiazol-5(2H)-ylidene]ethyl phosphate + 4-amino-2-methyl-5-(diphosphooxymethyl)pyrimidine + 2 H(+) = thiamine phosphate + CO2 + diphosphate. It carries out the reaction 2-(2-carboxy-4-methylthiazol-5-yl)ethyl phosphate + 4-amino-2-methyl-5-(diphosphooxymethyl)pyrimidine + 2 H(+) = thiamine phosphate + CO2 + diphosphate. It catalyses the reaction 4-methyl-5-(2-phosphooxyethyl)-thiazole + 4-amino-2-methyl-5-(diphosphooxymethyl)pyrimidine + H(+) = thiamine phosphate + diphosphate. It functions in the pathway cofactor biosynthesis; thiamine diphosphate biosynthesis; thiamine phosphate from 4-amino-2-methyl-5-diphosphomethylpyrimidine and 4-methyl-5-(2-phosphoethyl)-thiazole: step 1/1. Its function is as follows. Condenses 4-methyl-5-(beta-hydroxyethyl)thiazole monophosphate (THZ-P) and 2-methyl-4-amino-5-hydroxymethyl pyrimidine pyrophosphate (HMP-PP) to form thiamine monophosphate (TMP). The polypeptide is Thiamine-phosphate synthase (Chlamydia abortus (strain DSM 27085 / S26/3) (Chlamydophila abortus)).